The following is a 410-amino-acid chain: MTNKVSLDKSKIKFVLFEGVHQSALDTLHAAGYTNIDYYKKALDGDELKEAIKDVHFIGLRSRTHLTAEMIEAAPKLIAVGCFCIGTNQVDLNAAKARGIPVFNAPFSNTRSVAELVLGEILLLMRNVPQANAEVHRGVWNKSATGSHEVRGKKLGIIGYGHIGSQLSIIAESLGMDVYFYDIENKLPLGNAKQVRSLEELLSSCDVVSLHVPELPSTKNLMNVARIAQLKQGAILINAARGTVVDIDALAQALKDGKLQGAAIDVFPVEPASINEEFISPLREFDNVILTPHIGGSTAEAQENIGFEVAGKFVKYSDNGSTLSSVNFPEVSLPEHEGTKRLLHIHENRPGILNKLNQIFVEANLNIAAQYLQTDPKIGYVVVDVETNDASPLLTKLKEIDGTIRARVLY.

Residues 162–163 (HI), Asp-182, 239–241 (AAR), and Asp-265 each bind NAD(+). The active site involves Arg-241. The active site involves Glu-270. Residue His-293 is the Proton donor of the active site. Residue 293–296 (HIGG) coordinates NAD(+). The region spanning 341–410 (RLLHIHENRP…DGTIRARVLY (70 aa)) is the ACT domain.

The protein belongs to the D-isomer specific 2-hydroxyacid dehydrogenase family.

It carries out the reaction (2R)-3-phosphoglycerate + NAD(+) = 3-phosphooxypyruvate + NADH + H(+). The catalysed reaction is (R)-2-hydroxyglutarate + NAD(+) = 2-oxoglutarate + NADH + H(+). The protein operates within amino-acid biosynthesis; L-serine biosynthesis; L-serine from 3-phospho-D-glycerate: step 1/3. With respect to regulation, in bacteria displays feedback inhibition by L-serine. Its function is as follows. Catalyzes the reversible oxidation of 3-phospho-D-glycerate to 3-phosphonooxypyruvate, the first step of the phosphorylated L-serine biosynthesis pathway. Also catalyzes the reversible oxidation of 2-hydroxyglutarate to 2-oxoglutarate. The sequence is that of D-3-phosphoglycerate dehydrogenase (serA) from Haemophilus influenzae (strain ATCC 51907 / DSM 11121 / KW20 / Rd).